Reading from the N-terminus, the 178-residue chain is Caveolin-1 (178 aa).

Residue Ser2 is modified to N-acetylserine. The residue at position 2 (Ser2) is a Phosphoserine. Residues 2-94 (SGGKYVDSEG…WKASFTTFTV (93 aa)) form a required for homooligomerization region. Residues 2-104 (SGGKYVDSEG…TKYWFYRLLS (103 aa)) are Cytoplasmic-facing. The residue at position 5 (Lys5) is an N6-acetyllysine; alternate. A Glycyl lysine isopeptide (Lys-Gly) (interchain with G-Cter in ubiquitin); alternate cross-link involves residue Lys5. The residue at position 6 (Tyr6) is a Phosphotyrosine. Position 9 is a phosphoserine (Ser9). Position 14 is a phosphotyrosine; by ABL1 (Tyr14). Tyr25 carries the post-translational modification Phosphotyrosine. Residues Lys26 and Lys30 each participate in a glycyl lysine isopeptide (Lys-Gly) (interchain with G-Cter in ubiquitin) cross-link. Ser37 is modified (phosphoserine). Residues Lys39, Lys47, and Lys57 each participate in a glycyl lysine isopeptide (Lys-Gly) (interchain with G-Cter in ubiquitin) cross-link. The interaction with CAVIN3 stretch occupies residues 82–94 (DGIWKASFTTFTV). Residues 105–125 (ALFGIPMALIWGIYFAILSFL) constitute an intramembrane region (helical). Over 126–178 (HIWAVVPCIKSFLIEIQCISRVYSIYIHTVCDPLFEAIGKIFSNVRISLQKEI) the chain is Cytoplasmic. An interacts with SPRY1, SPRY2, SPRY3 and SPRY4 region spans residues 131 to 142 (VPCIKSFLIEIQ). 3 S-palmitoyl cysteine lipidation sites follow: Cys133, Cys143, and Cys156. The interacts with SPRY1, SPRY2, and SPRY4 stretch occupies residues 149-160 (SIYIHTVCDPLF). Residues 167–178 (FSNVRISLQKEI) are interacts with SPRY1, SPRY2, SPRY3 and SPRY4.

Belongs to the caveolin family. In terms of assembly, homooligomer. Interacts with GLIPR2. Interacts with NOSTRIN. Interacts with SNAP25 and STX1A. Interacts (via the N-terminus) with DPP4; the interaction is direct. Interacts with CTNNB1, CDH1 and JUP. Interacts with PACSIN2; this interaction induces membrane tubulation. Interacts with SLC7A9. Interacts with BMX and BTK. Interacts with TGFBR1. Interacts with CAVIN3 (via leucine-zipper domain) in a cholesterol-sensitive manner. Interacts with CAVIN1. Interacts with EHD2 in a cholesterol-dependent manner. Forms a ternary complex with UBXN6 and VCP; mediates CAV1 targeting to lysosomes for degradation. Interacts with ABCG1; this interaction regulates ABCG1-mediated cholesterol efflux. Interacts with NEU3; this interaction enhances NEU3 sialidase activity within caveola. Interacts (via C-terminus) with SPRY1, SPRY2 (via C-terminus), SPRY3, and SPRY4. Interacts with IGFBP5; this interaction allows trafficking of IGFBP5 from the plasma membrane to the nucleus. Post-translationally, phosphorylated at Tyr-14 by ABL1 in response to oxidative stress. In terms of processing, ubiquitinated. Undergo monoubiquitination and multi- and/or polyubiquitination. Monoubiquitination of N-terminal lysines promotes integration in a ternary complex with UBXN6 and VCP which promotes oligomeric CAV1 targeting to lysosomes for degradation. Ubiquitinated by ZNRF1; leading to degradation and modulation of the TLR4-mediated immune response.

It is found in the golgi apparatus membrane. It localises to the cell membrane. Its subcellular location is the membrane. The protein resides in the caveola. The protein localises to the membrane raft. Functionally, may act as a scaffolding protein within caveolar membranes. Forms a stable heterooligomeric complex with CAV2 that targets to lipid rafts and drives caveolae formation. Mediates the recruitment of CAVIN proteins (CAVIN1/2/3/4) to the caveolae. Interacts directly with G-protein alpha subunits and can functionally regulate their activity. Involved in the costimulatory signal essential for T-cell receptor (TCR)-mediated T-cell activation. Its binding to DPP4 induces T-cell proliferation and NF-kappa-B activation in a T-cell receptor/CD3-dependent manner. Recruits CTNNB1 to caveolar membranes and may regulate CTNNB1-mediated signaling through the Wnt pathway. Negatively regulates TGFB1-mediated activation of SMAD2/3 by mediating the internalization of TGFBR1 from membrane rafts leading to its subsequent degradation. Binds 20(S)-hydroxycholesterol (20(S)-OHC). This Aotus nancymaae (Ma's night monkey) protein is Caveolin-1 (CAV1).